Reading from the N-terminus, the 234-residue chain is Enolase-phosphatase E1 (234 aa).

Asp10 and Glu12 together coordinate Mg(2+). Residues 125–126 and Lys162 each bind substrate; that span reads SS. Mg(2+) is bound at residue Asp188.

It belongs to the HAD-like hydrolase superfamily. MasA/MtnC family. Monomer. The cofactor is Mg(2+).

It localises to the cytoplasm. It is found in the nucleus. It carries out the reaction 5-methylsulfanyl-2,3-dioxopentyl phosphate + H2O = 1,2-dihydroxy-5-(methylsulfanyl)pent-1-en-3-one + phosphate. It participates in amino-acid biosynthesis; L-methionine biosynthesis via salvage pathway; L-methionine from S-methyl-5-thio-alpha-D-ribose 1-phosphate: step 3/6. It functions in the pathway amino-acid biosynthesis; L-methionine biosynthesis via salvage pathway; L-methionine from S-methyl-5-thio-alpha-D-ribose 1-phosphate: step 4/6. Its function is as follows. Bifunctional enzyme that catalyzes the enolization of 2,3-diketo-5-methylthiopentyl-1-phosphate (DK-MTP-1-P) into the intermediate 2-hydroxy-3-keto-5-methylthiopentenyl-1-phosphate (HK-MTPenyl-1-P), which is then dephosphorylated to form the acireductone 1,2-dihydroxy-3-keto-5-methylthiopentene (DHK-MTPene). This chain is Enolase-phosphatase E1, found in Sordaria macrospora (strain ATCC MYA-333 / DSM 997 / K(L3346) / K-hell).